Here is a 370-residue protein sequence, read N- to C-terminus: Holliday junction branch migration complex subunit RuvB (370 aa).

The tract at residues 1–182 (MDERMMTSAK…FGVIHRLEYY (182 aa)) is large ATPase domain (RuvB-L). ATP contacts are provided by residues L21, R22, G63, K66, T67, T68, 129 to 131 (EDF), R172, Y182, and R219. Residue T67 coordinates Mg(2+). The interval 183–253 (RPDELEFIIL…VAREALRRLE (71 aa)) is small ATPAse domain (RuvB-S). Positions 256 to 370 (PRGLDTTDQR…AEQAALSFDE (115 aa)) are head domain (RuvB-H). R311 and R316 together coordinate DNA.

This sequence belongs to the RuvB family. In terms of assembly, homohexamer. Forms an RuvA(8)-RuvB(12)-Holliday junction (HJ) complex. HJ DNA is sandwiched between 2 RuvA tetramers; dsDNA enters through RuvA and exits via RuvB. An RuvB hexamer assembles on each DNA strand where it exits the tetramer. Each RuvB hexamer is contacted by two RuvA subunits (via domain III) on 2 adjacent RuvB subunits; this complex drives branch migration. In the full resolvosome a probable DNA-RuvA(4)-RuvB(12)-RuvC(2) complex forms which resolves the HJ.

It localises to the cytoplasm. It catalyses the reaction ATP + H2O = ADP + phosphate + H(+). Its function is as follows. The RuvA-RuvB-RuvC complex processes Holliday junction (HJ) DNA during genetic recombination and DNA repair, while the RuvA-RuvB complex plays an important role in the rescue of blocked DNA replication forks via replication fork reversal (RFR). RuvA specifically binds to HJ cruciform DNA, conferring on it an open structure. The RuvB hexamer acts as an ATP-dependent pump, pulling dsDNA into and through the RuvAB complex. RuvB forms 2 homohexamers on either side of HJ DNA bound by 1 or 2 RuvA tetramers; 4 subunits per hexamer contact DNA at a time. Coordinated motions by a converter formed by DNA-disengaged RuvB subunits stimulates ATP hydrolysis and nucleotide exchange. Immobilization of the converter enables RuvB to convert the ATP-contained energy into a lever motion, pulling 2 nucleotides of DNA out of the RuvA tetramer per ATP hydrolyzed, thus driving DNA branch migration. The RuvB motors rotate together with the DNA substrate, which together with the progressing nucleotide cycle form the mechanistic basis for DNA recombination by continuous HJ branch migration. Branch migration allows RuvC to scan DNA until it finds its consensus sequence, where it cleaves and resolves cruciform DNA. In Heliobacterium modesticaldum (strain ATCC 51547 / Ice1), this protein is Holliday junction branch migration complex subunit RuvB.